The sequence spans 830 residues: Dimethylglycine oxidase (830 aa).

FAD-binding positions include 14–15 (IV), 35–36 (DQ), 45–48 (STSH), Leu52, and Val174. The residue at position 48 (His48) is a Pros-8alpha-FAD histidine. Active-site residues include His225 and Tyr259. FAD-binding positions include Tyr259 and 360 to 363 (VWVT). Tyr539 is a (6S)-5,6,7,8-tetrahydrofolate binding site. Residue Asp552 is the For 5,10-methylenetetrahydrofolate synthesis activity of the active site. Residues Thr554, Gly566, and 658–660 (ELY) contribute to the (6S)-5,6,7,8-tetrahydrofolate site.

Belongs to the GcvT family. FAD is required as a cofactor.

The catalysed reaction is N,N-dimethylglycine + O2 + H2O = sarcosine + formaldehyde + H2O2. The enzyme catalyses N,N-dimethylglycine + (6S)-5,6,7,8-tetrahydrofolate + O2 = sarcosine + (6R)-5,10-methylene-5,6,7,8-tetrahydrofolate + H2O2. In terms of biological role, catalyzes the oxidative demethylation of N,N-dimethylglycine to yield sarcosine, formaldehyde and hydrogen peroxide. The oxidation of dimethylglycine is coupled to the synthesis of 5,10-methylenetetrahydrofolate through an unusual substrate channeling mechanism. This channeling occurs by nonbiased diffusion of the iminium intermediate through a large solvent cavity connecting active site 1 (N-terminus) and active site 2 (C-terminus). The synthesis of 5,10-methylenetetrahydrofolate (at active site 2) prevents the accumulation of formaldehyde, formed by hydrolysis of the iminium intermediate product (at active site 1). Does not oxidize sarcosine. The protein is Dimethylglycine oxidase (dmg) of Arthrobacter globiformis.